The primary structure comprises 5125 residues: MYYLALSSGFLGQAIKTSILAYLASVLLAASQGVFPRLENVGAFKKVSIVPSHATCGYPGPSTFCRSAVAAEHAQLCAERLCIQDCPYRSASPPYTALLEGLRSCIPADHGDLHPYSRSNSTSFIFGSHKNCPSLQAPRLAAEFTLAVWLKPERGSTMCVLEKTADGQIVFKVTISERETMFYYRTVNGLQPPIKVMTPGRILMKKWIHHTVQVHETEVSSFVDGLEENSTAFDTRTLRDSIMDSVPSTVLIGQSLNGSELFVGRMQDFRLYNVSLTNREILELFSGDLPHLHIQSHCRCPGSHPRVHPSVQQYCIPNGVEDTLQHRVSRLNPEAHPLSFINDDDVATSWISHVFTDITQLNQGVAISIDLENGQYQVFQITIRFSSPQPVAMRIQRKKADKSLWEDWQYFARNCSVWGMKNNGDLENPNSVNCLQFPEFIPFSHGNVTFDLLTSGQKHRPGDYDFYNSSLLQEFMTATQIRLYFRGLFYPAWHTVDSRHRYYAVDEITIIGRCQCHGHAETCDRTRRPYRCLCSPHSFTEGPQCGRCSPLYNDKPFRSGNKVHAFNCKPCQCHGHASSCHYDASMDPFPLEYNRGGGGVCDDCQHHTTGRNCESCQDYFYRPIGADPADPEVCKHCDCNRDGTRNGSLLCDLVGDQCDCKRRVSGRRCFRCHIGFYGLQALDPDCCRPCDCNPSGTVDGDITCHHNSGQCSCKANVIGLRCDRCSFGFKFLRSLNADGCEPCHCNLHGSVNQLCDPLSGQCVCKKEAKGLRCDVCRENFYGLPWSACEVCDCNRAGTQAGTVCDAETGQCVCKPSVGGRRCSECKEGYFNLRQNDSHLCLPCNCEKTGTVNGSLLCDKSTGQCPCKLGVTGLRCHQCKPHRFNLTMDNPQGCQACDCDSLGTLLGSMCDPVSGQCLCLPHRQERRCVQCQPGCYSSPSNATGCLPCLCHTVATKNCICNSVTGHCYCPDPSTTGLSWHQCQDRYFRFDPLTGRCRPCHCHVAGASNGTCDAVTGQCFCKEFVTGSKCDTCVPGASHLDVNNLLACSKTPSQQPPPRGRVQSSSAINLSWSPPDFPNAHWLTYTLFRDDSEIYTTDDQHPYYTQYFLDTSLSPHTAYSYYIETSNVHSSTRSIPVIYKTKPEGSEGHLNLTHIIPVASDSITLVWTGLSNHSGPIEKYVLSCTPVDHTEPCVSYEGPETSATIRNLVPFTQYCFSVQGCTNGSCLYSSPITVTTAQAPPQRQEPPTVWKISPTELKVEWSRPVDSNGVIIRYELYMKRWPSTEESLVFESHGWFHSHPASPSANQSENVLQDPQVSTVLSGLDPHTEYAFRVLAVNMAGSVSSAWASERTGESAPVFMAAPSVSPLSPYSLSVSWEKPAENFTRGEIIGYKISMVSERSPQRDVPVMCSKLVHFAESQDQSYIVQRLKPYRTYSFTVSLCASVGCVTSALGEGQTLAAAPAQLRSPMVTGVTSTTVHIRWLPPAEVNGPPPLYRLERRESFLPAATAARTKGTRFMGDGYCRFPRTAHPDFIGIKASFWTRVPEGLILLALHPDNQEEYFALQLKSGRPYFLYNPQGSLVEVTTADDHSQQYSDGQWHEITAIRHQSFGQITLDEQYTDSSASLNGSSVTGGYTRLFVGGLPQGHTILQKRPVRRGFVGCLKDVSILKGSSPSGTWLPLDWQSSEEQVNVHHSWEGCPTDLEEGVQFLGAGFLELRSDTFHAAKDFEISLKFQTDQLNGLLLFIHNTEGLDFLAMELKSGLLSFQLNSSRILTRVEVRLGRTHCDGKWNRVTIRREGSMVSVGVNELTKSTSRAGDQPPLLTSPVYLGGIPQELQASYRHLTLEQGFRGCVKEVAFTRGAVVNLASVSSRAVRVNQDGCLSSDSTVNCGGNDSILVYRGSRQSVYESGLQPFTEYLYRVTASHKGGSVSSDWSRGRTLGSAPHSVPTPSRAQSINGYSVEVAWNEPAMVKGVLEKYILKAYSEDSAQPHMPSASTEFNNTDIRTGILTGLHPFHSYAVTLTACSRAGCTESSRALSISTPQEAPQEVQAPVAEALPNSLSFFWSPPRQANGIITQYSLYMDGRLVYTGKGQNYTVTDLRVFTAYEITVGACTRAGCTNSSRVILHTAQLPPERVDPPVLAILDSRTVHIQWKQPRQLNGILERYILYTLNPTHNSTVWDVVYNSTENLQTHLLYHLSPGCLYLIKLGACTGGGCTTSEPSQALMDETVPEGVPAPRAHSHSPDSFNISWTEPGHPNGVITTYELYLDGTLIHNSSELSCHAYGFDPGSLHTFQVQACTAKGCALGPLVENRTLEAPPEGTVNLFVKPEGSREAAVRWDAPPHPNGRLTYSVLITGNFYADQAGDNYTLLSSTKTVHSSKGDRLWVLVDRLVPCSNYTVQVNASNSQGSVLSDRVSVEMPPGAPDGLLSPRLAAATPTSLQVVWSTPARNNAPGSPRYQLQMRPDPSTRGLLELFPIPSALLSYEVTGLQPFTVYEFRLVATNGFGSAYSDWTPLMTTEDKPGPMDAPVLNVKAGMMSVAWRKPTECNGAITHYNIYQHGRLYLTVSGGVTNCTVVHLRPHTAYQFQIEACSSKGCSMSPASETVWTLPGTPEGIPGPELLPYTPTKIIVSWQPPTHLDGLVENITIERRVKEQEEVRSLVILPRSQAVRFIDNDPALRPWTHYEYRVLGSTLNGGTNSSAWVEVTTRPSRPSGVQPPTVHVLGPDAVEVTWKAPLIRNGDIVSYEIRMPDPLIEITNVTSFVLSHLVKHLIPFTNYSVSIVACSGGHGYLGGCTESLPTFATTHPALPQELTPLSISLLGQSYVGISWQPPSKPNGPNLRYELLRRKIQQPLASNPPEDLNLWHNIYSGTRRFYEDKGLSRFTTYEYKLFVHNSLGFTPSQEVTVTTLAGSPERGATVTASILNHTAIDVRWKRPTFQDLQGDVEYYTLFWSSGTSVESLKIFPDVDFHVIGHLAPNVEYQVFLLVFNGVHAINSTVVRVTTWEEEPRGMRPPEVVIINSTAVRVIWTSPSNPNAVITESSVYANNELHKAGAGAPGSFTLEDLSPFTIYDIQVEVCTKDACVKSSGTQVSTAEDTPSGISIPIIRDITSRSLQIDWTAPGNPNGIILGYDVLRKTWRLCSETQKLTDKPRDELCKAVKCQYPGNVCGHTCYSPGTKVCCDGLLYDPQPGYSCCEEKYIALLPNSTGVCCGGRQREAQPDHQCCSGHYIRILPGEICCPDERHNRVSVGFGDACCGTMPYATSGSQVCCAGKLQDGYRRQCCGGEMVSQDFKCCGGGEEGMVYSSLPGMLCCGQDYVNMSDTICCSASSGDSKAHVRGSDPMPVRCCHTELIPESQQCCDGVGYNPVKYVCSDEISAGMATEETRVCATVCPATMRATAHCGQCDFNATTHICTVSRGPLNPIGKETAEGLCSTAEEIVHSGDENTRSFIDTDLEPSTVYEYRVSVWNSYGRGFSQSVRASTREDVPQGVTAPRWARTGNHEDVIFLTWKEPTQSNGPITHYILLRDGRERFQGAALSFTDTQGIQPLQEYSYQLKACTAAGCADSCKVVATATRGVLESVPPPNITAQSPETLHLSWSVPEKRNDAIKEYQLWLDGKGLIYTDTNDRRQHTVTGLQPHTNYSFTLSACTSVGCTSSEPSVGQTLQAAPQGVWVTPRHIIINSTTVELYWNPPERPNGVISQYRLRRNGSLLLVGGRDDQSFTDKNLEPNSRYIYTLEARTGGGSSLSEEYLVQMPMWTPEDVHPPCNVTVLGSDSIFVAWPAPGILLPKIPVEYSILLSGGNMMLLTFSVGLRQSAYLKNLAPFTQYEIRIQACQEGCGVSPGTHVRTLEAAPVGLMPPLLKALGSHCIEVKWTPPTRPNGIITSYVIHRRPADTEEESLLFVWSEGALEFTDDTDTLRPFTLYEYRVRAWNSKGVVDSPWSSVQTLEAPPQDLPAPWVQVTSAHSVLLNWTEPEAPNGLISQYHVIYQERPDEAAPGSSTVHAFTVKGSSRQAHLFGLEPFTTYHIGVAAVNRAGKVSSPWTLIKTLESAPSGLMNFTAEQREGGRALLLQWSEPVRTNGVIKAYNVFSDGLPEYSGLGRQFLFRRLAPFTLYILTLEACTAAGCAHSVPQTLWTEEAPPDSQMAPTIQSVEPTSVRLHWSQPANPNGKIIRYEVIRRRLQGEDWGNRTVQADENTVFTEYNTEGNGWVCTDTGLQPWGLYSYRICTWNSAGHTCSSWSVVRTSQAPPDGLSPPEVSYVSTSPLQLLISWFAPRHTNGVIQSYRLQRNGVFAAASFNSSTFSYTDGQLLPFTTYSYAVLACTGGGCCTSEPTNITTPEASPAGVSPPVLWAIGAHQINVSWSPPSVPNGKIAKYLLHCDGEEHLAGQDLSLLLSNLRPFTQYNVSLVACTKGGCTASRVASAWTMEAPPEDMDPPTLHVMGPESIEITWAPPRNPHGQIRSYELRRDGAIVYIGLETRYHDFILTPGVQYGYTVTATNSRGSVLSPLVKGQTSPSAPSGLQPPKLRAGEALELLVNWNPPVRTNGKITNYTLFIRELLEGEIRTMCINTTHSSFGTRSLAVKHLKPFHRYEVRVQACTALGCTSSEWTPTQTSEIPPLLQPAPHLEVQTAAGGFQPIVAVWWAGPLQPHGKIVRFELYRRQTASWPGTSSPLLIYNGSLSSFTDRELLPFTEYEYQVWAVNSAGKVASNWTWCRTGPAPPEGLKAPTFHTVSSTQAVVNISAPSKPNGNISLFRVFSNSSGTHVMLSEGMATQQTLHDLRPFTTYAIGVEACTCFNCCSRGPTAELRTHPAPPSGLSPPQVQTLGSRMASFQWAPPQLPNGVIHSYELQLHRACPPDSAPHCPPSPTERKYWGPGHRASLAGLQPNTAYGVQVVAHNEAGSTASGWTSFRTKKEMPQYQALFSVDSNASTVWVDWSGTFVLNGQLKEYVVTDGGRRVYSGLDTTLYIPRTVDKTFFFQVTCTTDIGSVKTPLVQYDATTGFGLVLTTPGGKKGAGTKSTEFYTDTRLPRSGTPVSIRSSQSVSVLRIPSQSQLSHAYSQGSLHRSVSQLMDSPDKKALTEDSLWETIMGHSSGLCVDEEELMNAIKGFSSVTKEHTAFTDTHL.

Positions 1–33 are cleaved as a signal peptide; sequence MYYLALSSGFLGQAIKTSILAYLASVLLAASQG. 7 N-linked (GlcNAc...) asparagine glycosylation sites follow: asparagine 120, asparagine 229, asparagine 257, asparagine 273, asparagine 414, asparagine 447, and asparagine 468. The Laminin N-terminal domain occupies 273–513; sequence NVSLTNREIL…AVDEITIIGR (241 aa). 39 cysteine pairs are disulfide-bonded: cysteine 514–cysteine 523, cysteine 516–cysteine 532, cysteine 534–cysteine 545, cysteine 548–cysteine 568, cysteine 571–cysteine 580, cysteine 573–cysteine 601, cysteine 604–cysteine 613, cysteine 616–cysteine 634, cysteine 637–cysteine 651, cysteine 639–cysteine 658, cysteine 660–cysteine 669, cysteine 672–cysteine 687, cysteine 690–cysteine 704, cysteine 692–cysteine 711, cysteine 713–cysteine 722, cysteine 725–cysteine 740, cysteine 743–cysteine 755, cysteine 745–cysteine 762, cysteine 764–cysteine 773, cysteine 776–cysteine 788, cysteine 791–cysteine 804, cysteine 793–cysteine 811, cysteine 813–cysteine 822, cysteine 825–cysteine 840, cysteine 843–cysteine 857, cysteine 845–cysteine 864, cysteine 866–cysteine 875, cysteine 878–cysteine 893, cysteine 896–cysteine 909, cysteine 898–cysteine 916, cysteine 918–cysteine 927, cysteine 930–cysteine 944, cysteine 947–cysteine 959, cysteine 949–cysteine 966, cysteine 981–cysteine 995, cysteine 998–cysteine 1010, cysteine 1000–cysteine 1017, cysteine 1019–cysteine 1028, and cysteine 1031–cysteine 1046. Laminin EGF-like domains lie at 514–570, 571–636, 637–689, 690–742, 743–790, 791–842, 843–895, 896–946, 947–997, and 998–1048; these read CQCH…NCKP, CQCH…VCKH, CDCN…CCRP, CDCN…GCEP, CHCN…ACEV, CDCN…LCLP, CNCE…GCQA, CDCD…GCLP, CLCH…RCRP, and CHCH…ACSK. N-linked (GlcNAc...) asparagine glycosylation is present at asparagine 646. 2 N-linked (GlcNAc...) asparagine glycosylation sites follow: asparagine 835 and asparagine 852. N-linked (GlcNAc...) asparagine glycosylation occurs at asparagine 884. The N-linked (GlcNAc...) asparagine glycan is linked to asparagine 940. An N-linked (GlcNAc...) asparagine glycan is attached at asparagine 1007. Fibronectin type-III domains lie at 1054-1142, 1146-1240, 1241-1356, and 1357-1461; these read PPPR…TKPE, GHLN…APPQ, RQEP…SAPV, and FMAA…AAPA. Asparagine 1067, asparagine 1149, asparagine 1170, asparagine 1221, asparagine 1304, and asparagine 1381 each carry an N-linked (GlcNAc...) asparagine glycan. Laminin G-like domains follow at residues 1510 to 1697 and 1702 to 1879; these read TKGT…WEGC and EEGV…QDGC. Cystine bridges form between cysteine 1660–cysteine 1697 and cysteine 1850–cysteine 1879. Fibronectin type-III domains are found at residues 1857–1943, 1945–2042, 2043–2132, 2133–2230, 2231–2318, 2319–2421, 2425–2519, 2520–2613, 2614–2709, 2713–2806, 2807–2910, 2914–3005, 3009–3099, 3380–3485, 3486–3577, 3580–3670, 3672–3762, 3765–3852, 3853–3950, 3951–4054, 4055–4143, 4144–4251, 4252–4344, 4345–4432, 4433–4517, 4518–4620, 4625–4720, 4721–4813, and 4814–4916; these read TRGA…SAPH, VPTP…TPQE, APQE…LPPE, RVDP…TVPE, GVPA…APPE, GTVN…MPPG, GLLS…TTED, KPGP…TPEG, IPGP…TRPS, GVQP…THPA, LPQE…TLAG, RGAT…TWEE, GMRP…TPSG, ATEE…TRED, VPQG…TRGV, SVPP…AAPQ, VWVT…TPED, PPCN…TLEA, APVG…TLEA, PPQD…SAPS, GLMN…APPD, SQMA…APPD, GLSP…ASPA, GVSP…APPE, DMDP…TSPS, APSG…IPPL, PHLE…TGPA, PPEG…THPA, and PPSG…TKKE. The segment at 1930–1950 is disordered; sequence SDWSRGRTLGSAPHSVPTPSR.

In terms of assembly, interacts with collagen IV and fibronectin via its laminin EGF-like domains. Interaction with collagen may be required for stable integration into the basement membrane. Interacts with NINL. Interacts with USH1C. Interacts (via the cytoplasmic region) with PDZD7. Component of USH2 complex, composed of ADGRV1, PDZD7, USH2A and WHRN. Interacts with ADGRV1/MASS1 (via N-terminal PDZ domain). Interacts (via the cytoplasmic region) with WHRN. Interacts (via the cytoplasmic region) with VEZT and MYO7A (via MyTH4-FERM domains); the interaction associates VEZT with the USH2 complex at the stereocilia base. As to expression, present in the synaptic terminals of inner ear hair cells (at protein level). Predominantly expressed in the retina and cochlea. Weakly expressed in brain and kidney. Detectable from E17 in the neural epithelium, but not in the retinal pigment epithelium (RPE) of the developing retina. After birth, it is expressed at P7 and remains expressed during adulthood.

Its subcellular location is the secreted. The protein resides in the cell projection. It localises to the stereocilium membrane. The protein localises to the photoreceptor inner segment. Its function is as follows. Involved in hearing and vision as member of the USH2 complex. In the inner ear, required for the hair bundle ankle formation, which connects growing stereocilia in developing cochlear hair cells. In retina photoreceptors, the USH2 complex is required for the maintenance of periciliary membrane complex that seems to play a role in regulating intracellular protein transport. In Rattus norvegicus (Rat), this protein is Usherin (Ush2a).